The following is a 301-amino-acid chain: Probable alpha-L-glutamate ligase (301 aa).

In terms of domain architecture, ATP-grasp spans 104 to 287 (LQLLSRRGIG…VAGMIIEHLE (184 aa)). Residues Lys-141, 178–179 (EY), Asp-187, and 211–213 (RSN) each bind ATP. Positions 248, 260, and 262 each coordinate Mg(2+). Mn(2+) is bound by residues Asp-248, Glu-260, and Asn-262.

This sequence belongs to the RimK family. Mg(2+) is required as a cofactor. Requires Mn(2+) as cofactor.

The chain is Probable alpha-L-glutamate ligase from Pseudomonas entomophila (strain L48).